A 484-amino-acid polypeptide reads, in one-letter code: Ribosomal RNA small subunit methyltransferase F (484 aa).

S-adenosyl-L-methionine contacts are provided by residues 126-132, Glu150, Asp177, and Asp195; that span reads AAAPGSK. Cys248 (nucleophile) is an active-site residue.

It belongs to the class I-like SAM-binding methyltransferase superfamily. RsmB/NOP family.

The protein localises to the cytoplasm. It carries out the reaction cytidine(1407) in 16S rRNA + S-adenosyl-L-methionine = 5-methylcytidine(1407) in 16S rRNA + S-adenosyl-L-homocysteine + H(+). Its function is as follows. Specifically methylates the cytosine at position 1407 (m5C1407) of 16S rRNA. The sequence is that of Ribosomal RNA small subunit methyltransferase F from Pectobacterium atrosepticum (strain SCRI 1043 / ATCC BAA-672) (Erwinia carotovora subsp. atroseptica).